The sequence spans 138 residues: Small ribosomal subunit protein uS11 (138 aa).

The segment covering methionine 1 to lysine 12 has biased composition (low complexity). Positions methionine 1 to glycine 28 are disordered. Residues lysine 13–lysine 22 show a composition bias toward basic residues.

It belongs to the universal ribosomal protein uS11 family. As to quaternary structure, part of the 30S ribosomal subunit. Interacts with proteins S7 and S18. Binds to IF-3.

In terms of biological role, located on the platform of the 30S subunit, it bridges several disparate RNA helices of the 16S rRNA. Forms part of the Shine-Dalgarno cleft in the 70S ribosome. This is Small ribosomal subunit protein uS11 from Mycobacterium sp. (strain JLS).